The chain runs to 423 residues: Glutamate--cysteine ligase EgtA (423 aa).

The protein belongs to the glutamate--cysteine ligase type 2 family. EgtA subfamily.

It catalyses the reaction L-cysteine + L-glutamate + ATP = gamma-L-glutamyl-L-cysteine + ADP + phosphate + H(+). The protein operates within amino-acid biosynthesis; ergothioneine biosynthesis. Its function is as follows. Catalyzes the synthesis of gamma-glutamylcysteine (gamma-GC). This compound is used as substrate for the biosynthesis of the low-molecular thiol compound ergothioneine. In Mycolicibacterium smegmatis (strain ATCC 700084 / mc(2)155) (Mycobacterium smegmatis), this protein is Glutamate--cysteine ligase EgtA.